The primary structure comprises 37 residues: Alpha-conotoxin TxID (37 aa).

Positions 1–21 (FDGRNAAGNDKMSALMALTTR) are excised as a propeptide. Cystine bridges form between cysteine 23–cysteine 29 and cysteine 24–cysteine 36. At cysteine 36 the chain carries Cysteine amide.

It belongs to the conotoxin A superfamily. Post-translationally, unmodified Met-32 is essential for toxin binding to rat alpha-3-beta-4/CHRNA3-CHRNB4 nAChR. An oxidation of this methionine provokes a 13.3-fold decrease in inhibitory potency (IC(50)=245 nM instead of 18 nM). Owing to its potent activity, derivatives of this toxin have a potential in the development of a novel drug. Unfortunately, the oxidation of the methionine is readily to happen during toxin synthesis and oxidation steps as well as under oxidative environment in vivo, which should still be considered to find a solution to this major drawback. Expressed by the venom duct.

The protein resides in the secreted. In terms of biological role, alpha-conotoxins act on postsynaptic membranes, they bind to the nicotinic acetylcholine receptors (nAChR) and thus inhibit them. This toxin inhibits alpha-3-beta-4/CHRNA3-CHRNB4 (IC(50)=3.6-18.38 nM), alpha-6/alpha-3-beta-4 (CHRNA6/CHRNA3-CHRNB4) (IC(50)=33.9-94.1 nM), and alpha-2-beta-4/CHRNA2-CHRNB4 (IC(50)=4550 nM) nAChRs. The toxin competes with agonists in the orthosteric binding site of alpha-3-beta-4/CHRNA3-CHRNB4 and alpha-6-beta-4/CHRNA6-CHRNB4. This is Alpha-conotoxin TxID from Conus textile (Cloth-of-gold cone).